The sequence spans 551 residues: MNRRRFLQGSLAMAALSGTTGLSTLFSRAAFAADSDIADGQSRRFDFSVLQSMAHDLAQTPWGGAPRPLPNTLATMTPQAYNAIQYDAKQSLWNNIEDRQLDVQFFHMGMGFRRRVRMFSLDSASSQAREIHFRPELFNYNDAGVDTKQLEGQSDLGFAGFRAFKAPELARRDIVSFLGASYFRAVDDTYQYGLSARGLAIDTFTDTPEEFPDFTSFWFETVKPGDTTFTVYTLLDSPSITGAYKFVIHCEKSQVIMEVDNHLYARKDIKQLGISPMTSMFACGNNERRMCDTIHPQIHDSDRLAMWRGNGEWICRPLNNPQKLQFNAYQDKNPKGFGLLQLDRDFSHYQDIMGWYNKRPSLWVEPRNQWGKGSVGLMEIPTTGETLDNVVCFWQPEKPVKAGDELDFKYRLYWSAQPPVRSPLANVYATRTGMGGFPEGWAPGENYPKTWARRFAIDFVGGDLKAAAPKGIEPVITLSNGEARQVEILYVEPFDGYRILFDWYPTNDSTDPIDMRMFLRCQGDAISETWLYQYFPPAPDKRVYVDDRVMR.

The segment at residues 1–32 (MNRRRFLQGSLAMAALSGTTGLSTLFSRAAFA) is a signal peptide (tat-type signal).

Belongs to the OpgD/OpgG family. Post-translationally, predicted to be exported by the Tat system. The position of the signal peptide cleavage has not been experimentally proven.

It localises to the periplasm. Its pathway is glycan metabolism; osmoregulated periplasmic glucan (OPG) biosynthesis. In terms of biological role, probably involved in the control of the structural glucose backbone of osmoregulated periplasmic glucans (OPGs). This is Glucans biosynthesis protein D from Enterobacter sp. (strain 638).